The following is a 301-amino-acid chain: Haloalkane dehalogenase (301 aa).

Residue D123 is the Nucleophile of the active site. Residue D250 is the Proton donor of the active site. Catalysis depends on H279, which acts as the Proton acceptor.

This sequence belongs to the haloalkane dehalogenase family. Type 1 subfamily. In terms of assembly, monomer.

It carries out the reaction 1-haloalkane + H2O = a halide anion + a primary alcohol + H(+). Functionally, catalyzes hydrolytic cleavage of carbon-halogen bonds in halogenated aliphatic compounds, leading to the formation of the corresponding primary alcohols, halide ions and protons. The protein is Haloalkane dehalogenase of Phenylobacterium zucineum (strain HLK1).